We begin with the raw amino-acid sequence, 374 residues long: DNA replication and repair protein RecF (374 aa).

Residue glycine 34–threonine 41 coordinates ATP.

This sequence belongs to the RecF family.

Its subcellular location is the cytoplasm. Functionally, the RecF protein is involved in DNA metabolism; it is required for DNA replication and normal SOS inducibility. RecF binds preferentially to single-stranded, linear DNA. It also seems to bind ATP. The sequence is that of DNA replication and repair protein RecF from Rhizobium leguminosarum bv. trifolii (strain WSM2304).